The sequence spans 291 residues: Bifunctional protein FolD (291 aa).

NADP(+) contacts are provided by residues 168 to 170 (GRG), Thr-195, and Val-236.

This sequence belongs to the tetrahydrofolate dehydrogenase/cyclohydrolase family. In terms of assembly, homodimer.

It carries out the reaction (6R)-5,10-methylene-5,6,7,8-tetrahydrofolate + NADP(+) = (6R)-5,10-methenyltetrahydrofolate + NADPH. The enzyme catalyses (6R)-5,10-methenyltetrahydrofolate + H2O = (6R)-10-formyltetrahydrofolate + H(+). The protein operates within one-carbon metabolism; tetrahydrofolate interconversion. Its function is as follows. Catalyzes the oxidation of 5,10-methylenetetrahydrofolate to 5,10-methenyltetrahydrofolate and then the hydrolysis of 5,10-methenyltetrahydrofolate to 10-formyltetrahydrofolate. This Bifidobacterium adolescentis (strain ATCC 15703 / DSM 20083 / NCTC 11814 / E194a) protein is Bifunctional protein FolD.